The following is a 597-amino-acid chain: Aspartate--tRNA(Asp/Asn) ligase (597 aa).

Glu-176 contributes to the L-aspartate binding site. The tract at residues 200 to 203 (QQFK) is aspartate. L-aspartate contacts are provided by Arg-222 and His-451. Residue 222 to 224 (RDE) participates in ATP binding. Glu-489 is an ATP binding site. An L-aspartate-binding site is contributed by Arg-496. 541 to 544 (GIDR) contributes to the ATP binding site.

Belongs to the class-II aminoacyl-tRNA synthetase family. Type 1 subfamily. As to quaternary structure, homodimer.

It is found in the cytoplasm. The enzyme catalyses tRNA(Asx) + L-aspartate + ATP = L-aspartyl-tRNA(Asx) + AMP + diphosphate. Aspartyl-tRNA synthetase with relaxed tRNA specificity since it is able to aspartylate not only its cognate tRNA(Asp) but also tRNA(Asn). Reaction proceeds in two steps: L-aspartate is first activated by ATP to form Asp-AMP and then transferred to the acceptor end of tRNA(Asp/Asn). In Orientia tsutsugamushi (strain Boryong) (Rickettsia tsutsugamushi), this protein is Aspartate--tRNA(Asp/Asn) ligase.